Consider the following 192-residue polypeptide: uncharacterized protein (192 aa).

In terms of domain architecture, Nudix hydrolase spans 29-160; that stretch reads QRQAAVLVPI…PLDIERKQQR (132 aa). Positions 67 to 89 match the Nudix box motif; sequence GAADKTDRSIIETALREAQEEVA. Residues glutamate 83 and glutamate 87 each coordinate Mg(2+).

The protein belongs to the Nudix hydrolase family. PCD1 subfamily. Requires Mn(2+) as cofactor. Mg(2+) is required as a cofactor.

Probably mediates the hydrolysis of some nucleoside diphosphate derivatives. This is an uncharacterized protein from Pectobacterium atrosepticum (strain SCRI 1043 / ATCC BAA-672) (Erwinia carotovora subsp. atroseptica).